The sequence spans 258 residues: L-aspartate dehydrogenase 1 (258 aa).

2 residues coordinate NAD(+): Ala121 and Asn181. Residue His211 is part of the active site.

It belongs to the L-aspartate dehydrogenase family.

The catalysed reaction is L-aspartate + NADP(+) + H2O = oxaloacetate + NH4(+) + NADPH + H(+). It carries out the reaction L-aspartate + NAD(+) + H2O = oxaloacetate + NH4(+) + NADH + H(+). The protein operates within cofactor biosynthesis; NAD(+) biosynthesis; iminoaspartate from L-aspartate (dehydrogenase route): step 1/1. In terms of biological role, specifically catalyzes the NAD or NADP-dependent dehydrogenation of L-aspartate to iminoaspartate. The chain is L-aspartate dehydrogenase 1 from Bordetella pertussis (strain Tohama I / ATCC BAA-589 / NCTC 13251).